The sequence spans 470 residues: Cysteine--tRNA ligase (470 aa).

Cys-28 lines the Zn(2+) pocket. The 'HIGH' region motif lies at 30–40; it reads PTVYNYIHIGN. Residues Cys-212, His-237, and Glu-241 each coordinate Zn(2+). The 'KMSKS' region motif lies at 271-275; it reads KMSKS. Lys-274 is a binding site for ATP.

Belongs to the class-I aminoacyl-tRNA synthetase family. As to quaternary structure, monomer. Requires Zn(2+) as cofactor.

Its subcellular location is the cytoplasm. The catalysed reaction is tRNA(Cys) + L-cysteine + ATP = L-cysteinyl-tRNA(Cys) + AMP + diphosphate. This is Cysteine--tRNA ligase from Limosilactobacillus reuteri (strain DSM 20016) (Lactobacillus reuteri).